Here is a 316-residue protein sequence, read N- to C-terminus: tRNA(Ile)-lysidine synthase (316 aa).

33 to 38 contributes to the ATP binding site; sequence SGGTDS.

Belongs to the tRNA(Ile)-lysidine synthase family.

The protein localises to the cytoplasm. The catalysed reaction is cytidine(34) in tRNA(Ile2) + L-lysine + ATP = lysidine(34) in tRNA(Ile2) + AMP + diphosphate + H(+). Ligates lysine onto the cytidine present at position 34 of the AUA codon-specific tRNA(Ile) that contains the anticodon CAU, in an ATP-dependent manner. Cytidine is converted to lysidine, thus changing the amino acid specificity of the tRNA from methionine to isoleucine. This is tRNA(Ile)-lysidine synthase from Bdellovibrio bacteriovorus (strain ATCC 15356 / DSM 50701 / NCIMB 9529 / HD100).